The following is a 529-amino-acid chain: Bifunctional purine biosynthesis protein PurH (529 aa).

The MGS-like domain maps to glutamine 2–valine 148.

This sequence belongs to the PurH family.

The catalysed reaction is (6R)-10-formyltetrahydrofolate + 5-amino-1-(5-phospho-beta-D-ribosyl)imidazole-4-carboxamide = 5-formamido-1-(5-phospho-D-ribosyl)imidazole-4-carboxamide + (6S)-5,6,7,8-tetrahydrofolate. The enzyme catalyses IMP + H2O = 5-formamido-1-(5-phospho-D-ribosyl)imidazole-4-carboxamide. It participates in purine metabolism; IMP biosynthesis via de novo pathway; 5-formamido-1-(5-phospho-D-ribosyl)imidazole-4-carboxamide from 5-amino-1-(5-phospho-D-ribosyl)imidazole-4-carboxamide (10-formyl THF route): step 1/1. It functions in the pathway purine metabolism; IMP biosynthesis via de novo pathway; IMP from 5-formamido-1-(5-phospho-D-ribosyl)imidazole-4-carboxamide: step 1/1. This chain is Bifunctional purine biosynthesis protein PurH, found in Photorhabdus laumondii subsp. laumondii (strain DSM 15139 / CIP 105565 / TT01) (Photorhabdus luminescens subsp. laumondii).